Reading from the N-terminus, the 257-residue chain is BTB/POZ domain-containing protein KCTD1 (257 aa).

Positions 1–25 (MSRPLITRSPASPLNNQGIPTPAQL) are disordered. 2 positions are modified to phosphoserine: Ser9 and Ser12. Positions 9-25 (SPASPLNNQGIPTPAQL) are enriched in polar residues. The BTB domain maps to 30–100 (APVHIDVGGH…LRTSKLLIPD (71 aa)).

As to quaternary structure, forms homopentamers. Interacts with KCTD15, probably forming heteropentamers depending on its abundance in a cell-type dependent manner. Interacts with TFAP2A, TFAP2B and TFAP2C via the BTB domain. Post-translationally, sumoylated.

The protein resides in the nucleus. In terms of biological role, may repress the transcriptional activity of AP-2 family members, including TFAP2A, TFAP2B and TFAP2C to various extent. This is BTB/POZ domain-containing protein KCTD1 (KCTD1) from Bos taurus (Bovine).